We begin with the raw amino-acid sequence, 638 residues long: Bifunctional protein glk (638 aa).

The tract at residues 1-20 is disordered; it reads MSTGVQTKAAPGAGQHADGP. The segment at 1-341 is glucokinase; that stretch reads MSTGVQTKAA…QLSNRAGGSS (341 aa). 24–29 is an ATP binding site; it reads ADIGGT. Residues 342-418 form the HTH rpiR-type domain; it reads SAVFERIRQM…LKLATGLTGT (77 aa). The segment at 342 to 638 is putative HTH-type transcriptional regulator; it reads SAVFERIRQM…SHGAASSARD (297 aa). The H-T-H motif DNA-binding region spans 378 to 397; the sequence is IVDIARKADVSQPTVIRFCR. The SIS domain maps to 462–601; that stretch reads AIDLLNGARR…AVGVAIRRAV (140 aa).

This sequence in the N-terminal section; belongs to the bacterial glucokinase family.

The protein resides in the cytoplasm. The catalysed reaction is D-glucose + ATP = D-glucose 6-phosphate + ADP + H(+). This Paraburkholderia xenovorans (strain LB400) protein is Bifunctional protein glk (glk).